The sequence spans 132 residues: Small ribosomal subunit protein uS11 (132 aa).

It belongs to the universal ribosomal protein uS11 family. As to quaternary structure, part of the 30S ribosomal subunit.

Its function is as follows. Located on the platform of the 30S subunit. This Sulfolobus acidocaldarius (strain ATCC 33909 / DSM 639 / JCM 8929 / NBRC 15157 / NCIMB 11770) protein is Small ribosomal subunit protein uS11.